An 861-amino-acid chain; its full sequence is DNA mismatch repair protein MutS (861 aa).

ATP is bound at residue 614 to 621 (GPNMGGKS).

Belongs to the DNA mismatch repair MutS family.

This protein is involved in the repair of mismatches in DNA. It is possible that it carries out the mismatch recognition step. This protein has a weak ATPase activity. The chain is DNA mismatch repair protein MutS from Mannheimia succiniciproducens (strain KCTC 0769BP / MBEL55E).